We begin with the raw amino-acid sequence, 159 residues long: MRIGHGFDVHAFGGEGPIIIGGVRIPYEKGLLAHSDGDVALHALTDALLGAAAQGDIGKLFPDTDPAFKGADSRELLREAWRRIQAKGYALGNVDVTIIAQAPKMLPHIPQMRVFIAEDLGCHMDDVNVKATTTEKLGFTGRGEGIACEAVALLIKATK.

Residues Asp-8 and His-10 each contribute to the a divalent metal cation site. 4-CDP-2-C-methyl-D-erythritol 2-phosphate contacts are provided by residues 8-10 and 34-35; these read DVH and HS. Residue His-42 coordinates a divalent metal cation. Residues 56 to 58, 61 to 65, 100 to 106, 132 to 135, Phe-139, and Arg-142 each bind 4-CDP-2-C-methyl-D-erythritol 2-phosphate; these read DIG, FPDTD, AQAPKML, and TTTE.

Belongs to the IspF family. In terms of assembly, homotrimer. A divalent metal cation is required as a cofactor.

It carries out the reaction 4-CDP-2-C-methyl-D-erythritol 2-phosphate = 2-C-methyl-D-erythritol 2,4-cyclic diphosphate + CMP. Its pathway is isoprenoid biosynthesis; isopentenyl diphosphate biosynthesis via DXP pathway; isopentenyl diphosphate from 1-deoxy-D-xylulose 5-phosphate: step 4/6. Functionally, involved in the biosynthesis of isopentenyl diphosphate (IPP) and dimethylallyl diphosphate (DMAPP), two major building blocks of isoprenoid compounds. Catalyzes the conversion of 4-diphosphocytidyl-2-C-methyl-D-erythritol 2-phosphate (CDP-ME2P) to 2-C-methyl-D-erythritol 2,4-cyclodiphosphate (ME-CPP) with a corresponding release of cytidine 5-monophosphate (CMP). This Escherichia coli O127:H6 (strain E2348/69 / EPEC) protein is 2-C-methyl-D-erythritol 2,4-cyclodiphosphate synthase.